The sequence spans 452 residues: Matrilin-3 (452 aa).

The N-terminal stretch at 1–24 is a signal peptide; that stretch reads MRRALGTLGCCLALLLPLLPAARG. One can recognise a VWFA domain in the interval 54–229; that stretch reads DLVFIIDSSR…GVIEKLTSKF (176 aa). 4 EGF-like domains span residues 235–275, 276–316, 317–357, and 358–398; these read AANT…RTCS, AVDV…KTCS, and AMDV…KTCS. 12 disulfides stabilise this stretch: Cys239-Cys250, Cys246-Cys259, Cys261-Cys274, Cys280-Cys291, Cys287-Cys300, Cys302-Cys315, Cys321-Cys332, Cys328-Cys341, Cys343-Cys356, Cys362-Cys373, Cys369-Cys382, and Cys384-Cys397. Asn295 is a glycosylation site (N-linked (GlcNAc...) asparagine). Residues 419 to 451 are a coiled coil; that stretch reads ALQDSVTSRLEALSTKLDEVSQKLQAYQDRQQV.

As to quaternary structure, can form homooligomers (monomers, dimers, trimers and tetramers) and heterooligomers with matrilin-1. Expression is restricted to cartilaginous tissues.

Its subcellular location is the secreted. Functionally, major component of the extracellular matrix of cartilage and may play a role in the formation of extracellular filamentous networks. The polypeptide is Matrilin-3 (MATN3) (Gallus gallus (Chicken)).